The following is a 612-amino-acid chain: Dihydroxy-acid dehydratase (612 aa).

Mg(2+) is bound at residue D81. C122 is a [2Fe-2S] cluster binding site. 2 residues coordinate Mg(2+): D123 and K124. K124 is subject to N6-carboxylysine. C193 provides a ligand contact to [2Fe-2S] cluster. Residue E489 coordinates Mg(2+). S515 (proton acceptor) is an active-site residue.

It belongs to the IlvD/Edd family. Homodimer. It depends on [2Fe-2S] cluster as a cofactor. Requires Mg(2+) as cofactor.

It carries out the reaction (2R)-2,3-dihydroxy-3-methylbutanoate = 3-methyl-2-oxobutanoate + H2O. It catalyses the reaction (2R,3R)-2,3-dihydroxy-3-methylpentanoate = (S)-3-methyl-2-oxopentanoate + H2O. The protein operates within amino-acid biosynthesis; L-isoleucine biosynthesis; L-isoleucine from 2-oxobutanoate: step 3/4. It participates in amino-acid biosynthesis; L-valine biosynthesis; L-valine from pyruvate: step 3/4. In terms of biological role, functions in the biosynthesis of branched-chain amino acids. Catalyzes the dehydration of (2R,3R)-2,3-dihydroxy-3-methylpentanoate (2,3-dihydroxy-3-methylvalerate) into 2-oxo-3-methylpentanoate (2-oxo-3-methylvalerate) and of (2R)-2,3-dihydroxy-3-methylbutanoate (2,3-dihydroxyisovalerate) into 2-oxo-3-methylbutanoate (2-oxoisovalerate), the penultimate precursor to L-isoleucine and L-valine, respectively. The sequence is that of Dihydroxy-acid dehydratase from Stutzerimonas stutzeri (strain A1501) (Pseudomonas stutzeri).